The following is a 793-amino-acid chain: Probable phosphoketolase 2 (793 aa).

The protein belongs to the XFP family. The cofactor is thiamine diphosphate.

This Nostoc sp. (strain PCC 7120 / SAG 25.82 / UTEX 2576) protein is Probable phosphoketolase 2.